Reading from the N-terminus, the 477-residue chain is Aspartyl/glutamyl-tRNA(Asn/Gln) amidotransferase subunit B (477 aa).

The protein belongs to the GatB/GatE family. GatB subfamily. In terms of assembly, heterotrimer of A, B and C subunits.

The enzyme catalyses L-glutamyl-tRNA(Gln) + L-glutamine + ATP + H2O = L-glutaminyl-tRNA(Gln) + L-glutamate + ADP + phosphate + H(+). It carries out the reaction L-aspartyl-tRNA(Asn) + L-glutamine + ATP + H2O = L-asparaginyl-tRNA(Asn) + L-glutamate + ADP + phosphate + 2 H(+). Allows the formation of correctly charged Asn-tRNA(Asn) or Gln-tRNA(Gln) through the transamidation of misacylated Asp-tRNA(Asn) or Glu-tRNA(Gln) in organisms which lack either or both of asparaginyl-tRNA or glutaminyl-tRNA synthetases. The reaction takes place in the presence of glutamine and ATP through an activated phospho-Asp-tRNA(Asn) or phospho-Glu-tRNA(Gln). This is Aspartyl/glutamyl-tRNA(Asn/Gln) amidotransferase subunit B from Ureaplasma parvum serovar 3 (strain ATCC 27815 / 27 / NCTC 11736).